The primary structure comprises 861 residues: Seed linoleate 9S-lipoxygenase-3 (861 aa).

The PLAT domain maps to 41–166 (QGFDILGSTV…HHKIDRIFFA (126 aa)). The Lipoxygenase domain occupies 169 to 861 (TYLPSETPAP…FRGIPNSISI (693 aa)). Residues 215–257 (NPDSGENHARPVLGGSETYPYPRRGRTGRKPTRKDPNSESRSD) are disordered. Residues 237 to 246 (RRGRTGRKPT) are compositionally biased toward basic residues. A compositionally biased stretch (basic and acidic residues) spans 247–257 (RKDPNSESRSD). 5 residues coordinate Fe cation: H522, H527, H713, N717, and I861.

This sequence belongs to the lipoxygenase family. The cofactor is Fe cation.

The protein localises to the cytoplasm. It carries out the reaction (9Z,12Z)-octadecadienoate + O2 = (9S)-hydroperoxy-(10E,12Z)-octadecadienoate. It participates in lipid metabolism; oxylipin biosynthesis. Functionally, plant lipoxygenase may be involved in a number of diverse aspects of plant physiology including growth and development, pest resistance, and senescence or responses to wounding. It catalyzes the hydroperoxidation of lipids containing a cis,cis-1,4-pentadiene structure. The protein is Seed linoleate 9S-lipoxygenase-3 (LOX1.3) of Pisum sativum (Garden pea).